The primary structure comprises 566 residues: Membrane protein insertase YidC (566 aa).

5 consecutive transmembrane segments (helical) span residues 3–23, 346–366, 369–389, 436–456, and 509–529; these read IKRI…FNAW, GWLW…HAVV, WGWS…WFSA, GGCL…YVII, and MWIL…GLVL.

The protein belongs to the OXA1/ALB3/YidC family. Type 1 subfamily. As to quaternary structure, interacts with the Sec translocase complex via SecD. Specifically interacts with transmembrane segments of nascent integral membrane proteins during membrane integration.

It is found in the cell inner membrane. Functionally, required for the insertion and/or proper folding and/or complex formation of integral membrane proteins into the membrane. Involved in integration of membrane proteins that insert both dependently and independently of the Sec translocase complex, as well as at least some lipoproteins. Aids folding of multispanning membrane proteins. This is Membrane protein insertase YidC from Coxiella burnetii (strain Dugway 5J108-111).